Reading from the N-terminus, the 118-residue chain is Holo-[acyl-carrier-protein] synthase (118 aa).

Positions 8 and 58 each coordinate Mg(2+).

Belongs to the P-Pant transferase superfamily. AcpS family. It depends on Mg(2+) as a cofactor.

The protein resides in the cytoplasm. The catalysed reaction is apo-[ACP] + CoA = holo-[ACP] + adenosine 3',5'-bisphosphate + H(+). In terms of biological role, transfers the 4'-phosphopantetheine moiety from coenzyme A to a Ser of acyl-carrier-protein. This chain is Holo-[acyl-carrier-protein] synthase, found in Streptococcus pyogenes serotype M28 (strain MGAS6180).